We begin with the raw amino-acid sequence, 85 residues long: Alpha-defensin 14 (85 aa).

The first 11 residues, 1–11, serve as a signal peptide directing secretion; it reads ALVLLAFQVQA. Residues 12-50 constitute a propeptide that is removed on maturation; it reads DPIQNTDEETKTEEQPGEDDQAVSVSFGDPEGSSLQEES. The disordered stretch occupies residues 13-48; it reads PIQNTDEETKTEEQPGEDDQAVSVSFGDPEGSSLQE. 3 cysteine pairs are disulfide-bonded: C56–C84, C58–C73, and C63–C83.

This sequence belongs to the alpha-defensin family. As to expression, paneth cells of the small bowel.

It is found in the secreted. In terms of biological role, probably contributes to the antimicrobial barrier function of the small bowel mucosa. This is Alpha-defensin 14 (Defa14) from Mus musculus (Mouse).